The following is a 455-amino-acid chain: C4-dicarboxylate transport protein (455 aa).

The next 8 helical transmembrane spans lie at 20-40 (HLYF…HFYP), 59-79 (MIIA…MGTL), 91-111 (GYFL…ANVI), 160-180 (GNIL…ILIG), 209-229 (PIGA…ASVV), 231-251 (LATL…VVLG), 344-364 (LLLV…AGFI), and 367-387 (AATL…ILGV).

The protein belongs to the dicarboxylate/amino acid:cation symporter (DAACS) (TC 2.A.23) family.

It localises to the cell inner membrane. Responsible for the transport of dicarboxylates such as succinate, fumarate, and malate from the periplasm across the membrane. The sequence is that of C4-dicarboxylate transport protein from Paracoccus denitrificans (strain Pd 1222).